The sequence spans 486 residues: NADH-quinone oxidoreductase subunit N (486 aa).

Helical transmembrane passes span 8–28 (LIAL…ILSI), 36–56 (FIAF…YFLI), 74–94 (ILYI…AYPW), 104–124 (EFYL…ISNH), 125–145 (MASL…LIAY), 160–180 (LVLS…IYAI), 204–224 (VLFG…MVPF), 239–259 (VLSF…LYFF), 270–290 (IFLI…LMAI), 298–318 (FFGY…LVSK), 329–349 (GIFL…INLF), 374–394 (ASIV…LGFF), 407–427 (HLWT…YGYL), and 459–479 (ILIF…NPLI).

It belongs to the complex I subunit 2 family. NDH-1 is composed of 13 different subunits. Subunits NuoA, H, J, K, L, M, N constitute the membrane sector of the complex.

It is found in the cell membrane. The catalysed reaction is a quinone + NADH + 5 H(+)(in) = a quinol + NAD(+) + 4 H(+)(out). Its function is as follows. NDH-1 shuttles electrons from NADH, via FMN and iron-sulfur (Fe-S) centers, to quinones in the respiratory chain. The immediate electron acceptor for the enzyme in this species is believed to be ubiquinone. Couples the redox reaction to proton translocation (for every two electrons transferred, four hydrogen ions are translocated across the cytoplasmic membrane), and thus conserves the redox energy in a proton gradient. The chain is NADH-quinone oxidoreductase subunit N from Buchnera aphidicola subsp. Schizaphis graminum (strain Sg).